Here is a 266-residue protein sequence, read N- to C-terminus: Glucosamine-6-phosphate deaminase (266 aa).

Asp-72 serves as the catalytic Proton acceptor; for enolization step. The For ring-opening step role is filled by Asp-141. His-143 serves as the catalytic Proton acceptor; for ring-opening step. Glu-148 functions as the For ring-opening step in the catalytic mechanism.

It belongs to the glucosamine/galactosamine-6-phosphate isomerase family. NagB subfamily. As to quaternary structure, homohexamer.

The catalysed reaction is alpha-D-glucosamine 6-phosphate + H2O = beta-D-fructose 6-phosphate + NH4(+). It functions in the pathway amino-sugar metabolism; N-acetylneuraminate degradation; D-fructose 6-phosphate from N-acetylneuraminate: step 5/5. Its activity is regulated as follows. Allosterically activated by N-acetylglucosamine 6-phosphate (GlcNAc6P). Its function is as follows. Catalyzes the reversible isomerization-deamination of glucosamine 6-phosphate (GlcN6P) to form fructose 6-phosphate (Fru6P) and ammonium ion. The protein is Glucosamine-6-phosphate deaminase of Aliivibrio salmonicida (strain LFI1238) (Vibrio salmonicida (strain LFI1238)).